A 184-amino-acid chain; its full sequence is Peptide deformylase 2 (184 aa).

Fe cation-binding residues include C110 and H153. The active site involves E154. Position 157 (H157) interacts with Fe cation.

This sequence belongs to the polypeptide deformylase family. Requires Fe(2+) as cofactor.

It catalyses the reaction N-terminal N-formyl-L-methionyl-[peptide] + H2O = N-terminal L-methionyl-[peptide] + formate. Functionally, removes the formyl group from the N-terminal Met of newly synthesized proteins. Requires at least a dipeptide for an efficient rate of reaction. N-terminal L-methionine is a prerequisite for activity but the enzyme has broad specificity at other positions. The polypeptide is Peptide deformylase 2 (Geobacillus stearothermophilus (Bacillus stearothermophilus)).